Reading from the N-terminus, the 82-residue chain is Cytochrome b559 subunit alpha (82 aa).

The chain crosses the membrane as a helical span at residues 22–36; that stretch reads VIHFVTLPSIFLAGF. His24 is a binding site for heme.

It belongs to the PsbE/PsbF family. Heterodimer of an alpha subunit and a beta subunit. PSII is composed of 1 copy each of membrane proteins PsbA, PsbB, PsbC, PsbD, PsbE, PsbF, PsbH, PsbI, PsbJ, PsbK, PsbL, PsbM, PsbT, PsbX, PsbY, PsbZ, Psb30/Ycf12, peripheral proteins PsbO, CyanoQ (PsbQ), PsbU, PsbV and a large number of cofactors. It forms dimeric complexes. Heme b is required as a cofactor.

Its subcellular location is the cellular thylakoid membrane. In terms of biological role, this b-type cytochrome is tightly associated with the reaction center of photosystem II (PSII). PSII is a light-driven water:plastoquinone oxidoreductase that uses light energy to abstract electrons from H(2)O, generating O(2) and a proton gradient subsequently used for ATP formation. It consists of a core antenna complex that captures photons, and an electron transfer chain that converts photonic excitation into a charge separation. The sequence is that of Cytochrome b559 subunit alpha from Parasynechococcus marenigrum (strain WH8102).